Here is a 716-residue protein sequence, read N- to C-terminus: Fatty acid oxidation complex subunit alpha (716 aa).

The enoyl-CoA hydratase/isomerase stretch occupies residues 1–189; that stretch reads MIYQSPTIQV…KVGAIDAVVA (189 aa). Asp-296 contributes to the substrate binding site. The tract at residues 311 to 716 is 3-hydroxyacyl-CoA dehydrogenase; it reads KDVNQAAVLG…AANNGSYYQA (406 aa). NAD(+) contacts are provided by residues Met-324, Asp-343, 400-402, Lys-407, and Ser-429; that span reads VVE. His-450 acts as the For 3-hydroxyacyl-CoA dehydrogenase activity in catalysis. Residue Asn-453 coordinates NAD(+). Positions 500 and 660 each coordinate substrate.

In the N-terminal section; belongs to the enoyl-CoA hydratase/isomerase family. It in the C-terminal section; belongs to the 3-hydroxyacyl-CoA dehydrogenase family. In terms of assembly, heterotetramer of two alpha chains (FadB) and two beta chains (FadA).

The enzyme catalyses a (3S)-3-hydroxyacyl-CoA + NAD(+) = a 3-oxoacyl-CoA + NADH + H(+). It catalyses the reaction a (3S)-3-hydroxyacyl-CoA = a (2E)-enoyl-CoA + H2O. It carries out the reaction a 4-saturated-(3S)-3-hydroxyacyl-CoA = a (3E)-enoyl-CoA + H2O. The catalysed reaction is (3S)-3-hydroxybutanoyl-CoA = (3R)-3-hydroxybutanoyl-CoA. The enzyme catalyses a (3Z)-enoyl-CoA = a 4-saturated (2E)-enoyl-CoA. It catalyses the reaction a (3E)-enoyl-CoA = a 4-saturated (2E)-enoyl-CoA. It participates in lipid metabolism; fatty acid beta-oxidation. Functionally, involved in the aerobic and anaerobic degradation of long-chain fatty acids via beta-oxidation cycle. Catalyzes the formation of 3-oxoacyl-CoA from enoyl-CoA via L-3-hydroxyacyl-CoA. It can also use D-3-hydroxyacyl-CoA and cis-3-enoyl-CoA as substrate. The chain is Fatty acid oxidation complex subunit alpha from Shewanella frigidimarina (strain NCIMB 400).